The sequence spans 502 residues: Xylan O-acetyltransferase 13 (502 aa).

The Cytoplasmic segment spans residues 1–53 (MWSALFSHLREVHKRSGVKEEKLIMKSPPAAGEAGCHKPQATATNKMTVLQSP). Residues 54–76 (LGLRTILTSLVAFFIVVSSVSLL) form a helical; Signal-anchor for type II membrane protein membrane-spanning segment. Residues 77 to 502 (FDRGQDAQAQ…EFLYAYIMHK (426 aa)) are Lumenal-facing. 4 disulfide bridges follow: cysteine 152-cysteine 203, cysteine 174-cysteine 239, cysteine 183-cysteine 483, and cysteine 399-cysteine 479. Asparagine 153, asparagine 163, asparagine 189, and asparagine 209 each carry an N-linked (GlcNAc...) asparagine glycan. The GDS motif signature appears at 226-228 (GDS). Serine 228 acts as the Nucleophile in catalysis. N-linked (GlcNAc...) asparagine glycosylation is found at asparagine 255, asparagine 267, asparagine 372, asparagine 401, and asparagine 442. Aspartate 478 (proton donor) is an active-site residue. The DXXH motif motif lies at 478–481 (DCTH). Histidine 481 serves as the catalytic Proton acceptor.

This sequence belongs to the PC-esterase family. TBL subfamily.

Its subcellular location is the golgi apparatus membrane. Its function is as follows. Xylan acetyltransferase required for 2-O- and 3-O-monoacetylation of xylosyl residues in xylan. Catalyzes the 2-O-acetylation of xylan, followed by nonenzymatic acetyl migration to the O-3 position, resulting in products that are monoacetylated at both O-2 and O-3 positions. The polypeptide is Xylan O-acetyltransferase 13 (Oryza sativa subsp. japonica (Rice)).